Reading from the N-terminus, the 659-residue chain is mRNA export factor ICP27 homolog (659 aa).

Residues Cys130, His266, Cys268, and Cys273 each contribute to the Zn(2+) site. The segment at 130–273 adopts a CHC2-type zinc-finger fold; the sequence is CMMSNGERPP…CEHACNDNAC (144 aa). The interval 317 to 659 is disordered; that stretch reads GSFDDSRSAT…GEDGESDMTL (343 aa). A compositionally biased stretch (low complexity) spans 324-336; that stretch reads SATSGDGSSCSSA. Polar residues predominate over residues 354–365; that stretch reads SDQTDTSNNGTV. Over residues 387–397 the composition is skewed to basic and acidic residues; it reads SPLDRPNDYHY. Low complexity predominate over residues 413 to 427; it reads GSGSSSTEAVSTASA. The segment covering 483–499 has biased composition (basic and acidic residues); the sequence is SPERRSSEERSSSDQRR. Residues 503–513 show a composition bias toward polar residues; that stretch reads LSRSASATSGG. Residues 553-575 show a composition bias toward low complexity; that stretch reads SRSNTPPSSPSKPDSAPAASASP. The segment covering 598–610 has biased composition (basic and acidic residues); that stretch reads ESVRVSERFETGD. Acidic residues-rich tracts occupy residues 617 to 628 and 646 to 659; these read ETEDESDDEDDQ and SETD…DMTL.

Belongs to the HHV-1 ICP27 protein family.

It is found in the virion tegument. Its subcellular location is the virion. The protein localises to the host nucleus. The protein resides in the host cytoplasm. Functionally, immediate early (EI) protein that plays many roles during productive infection including regulation of viral gene expression and nuclear export of intronless viral RNAs. The polypeptide is mRNA export factor ICP27 homolog (Elephantid herpesvirus 1 (isolate Asian elephant/Berlin/Kiba/1998) (EIHV-1)).